We begin with the raw amino-acid sequence, 320 residues long: o-succinylbenzoate synthase (320 aa).

Lys-133 (proton donor) is an active-site residue. Residues Asp-161, Glu-190, and Asp-213 each contribute to the Mg(2+) site. Lys-235 serves as the catalytic Proton acceptor.

The protein belongs to the mandelate racemase/muconate lactonizing enzyme family. MenC type 1 subfamily. Requires a divalent metal cation as cofactor.

It carries out the reaction (1R,6R)-6-hydroxy-2-succinyl-cyclohexa-2,4-diene-1-carboxylate = 2-succinylbenzoate + H2O. The protein operates within quinol/quinone metabolism; 1,4-dihydroxy-2-naphthoate biosynthesis; 1,4-dihydroxy-2-naphthoate from chorismate: step 4/7. It participates in quinol/quinone metabolism; menaquinone biosynthesis. In terms of biological role, converts 2-succinyl-6-hydroxy-2,4-cyclohexadiene-1-carboxylate (SHCHC) to 2-succinylbenzoate (OSB). The sequence is that of o-succinylbenzoate synthase from Escherichia coli (strain K12 / MC4100 / BW2952).